Consider the following 347-residue polypeptide: N-acetyl-gamma-glutamyl-phosphate reductase (347 aa).

The active site involves Cys-151.

Belongs to the NAGSA dehydrogenase family. Type 1 subfamily.

It is found in the cytoplasm. The enzyme catalyses N-acetyl-L-glutamate 5-semialdehyde + phosphate + NADP(+) = N-acetyl-L-glutamyl 5-phosphate + NADPH + H(+). Its pathway is amino-acid biosynthesis; L-arginine biosynthesis; N(2)-acetyl-L-ornithine from L-glutamate: step 3/4. Its function is as follows. Catalyzes the NADPH-dependent reduction of N-acetyl-5-glutamyl phosphate to yield N-acetyl-L-glutamate 5-semialdehyde. This chain is N-acetyl-gamma-glutamyl-phosphate reductase, found in Corynebacterium glutamicum (strain R).